Consider the following 706-residue polypeptide: Zinc finger CCCH domain-containing protein 56 (706 aa).

ANK repeat units follow at residues 83–113 and 118–150; these read EQRT…ELNL and DKST…DPNI. Residues 211-221 show a composition bias toward low complexity; the sequence is SSLLSLDSVSS. The disordered stretch occupies residues 211–235; it reads SSLLSLDSVSSPTKPHGTDVTFASE. 2 consecutive C3H1-type zinc fingers follow at residues 302–324 and 332–356; these read PCPD…HGVF and QYRT…HANE. 3 disordered regions span residues 396-427, 545-616, and 652-692; these read PSAA…QQNI, SPKN…QTHG, and QMLK…TRES. 2 stretches are compositionally biased toward polar residues: residues 397–427 and 545–560; these read SAAQ…QQNI and SPKN…QASS. At Ser568 the chain carries Phosphoserine. A compositionally biased stretch (low complexity) spans 580–592; that stretch reads SRSLSSRDFGSSL. Polar residues-rich tracts occupy residues 600–616, 652–667, and 677–686; these read DSGS…QTHG, QMLK…NRVV, and QGGSSVNPHN.

This Arabidopsis thaliana (Mouse-ear cress) protein is Zinc finger CCCH domain-containing protein 56.